The primary structure comprises 565 residues: Dihydroxy-acid dehydratase (565 aa).

[2Fe-2S] cluster is bound at residue Cys-53. Residue Asp-85 coordinates Mg(2+). Residue Cys-126 coordinates [2Fe-2S] cluster. The Mg(2+) site is built by Asp-127 and Lys-128. The residue at position 128 (Lys-128) is an N6-carboxylysine. Cys-198 lines the [2Fe-2S] cluster pocket. Glu-450 contacts Mg(2+). The Proton acceptor role is filled by Ser-476.

The protein belongs to the IlvD/Edd family. Homodimer. It depends on [2Fe-2S] cluster as a cofactor. Mg(2+) is required as a cofactor.

It catalyses the reaction (2R)-2,3-dihydroxy-3-methylbutanoate = 3-methyl-2-oxobutanoate + H2O. The catalysed reaction is (2R,3R)-2,3-dihydroxy-3-methylpentanoate = (S)-3-methyl-2-oxopentanoate + H2O. It functions in the pathway amino-acid biosynthesis; L-isoleucine biosynthesis; L-isoleucine from 2-oxobutanoate: step 3/4. It participates in amino-acid biosynthesis; L-valine biosynthesis; L-valine from pyruvate: step 3/4. Functionally, functions in the biosynthesis of branched-chain amino acids. Catalyzes the dehydration of (2R,3R)-2,3-dihydroxy-3-methylpentanoate (2,3-dihydroxy-3-methylvalerate) into 2-oxo-3-methylpentanoate (2-oxo-3-methylvalerate) and of (2R)-2,3-dihydroxy-3-methylbutanoate (2,3-dihydroxyisovalerate) into 2-oxo-3-methylbutanoate (2-oxoisovalerate), the penultimate precursor to L-isoleucine and L-valine, respectively. This Synechococcus sp. (strain JA-2-3B'a(2-13)) (Cyanobacteria bacterium Yellowstone B-Prime) protein is Dihydroxy-acid dehydratase.